The primary structure comprises 387 residues: Histone deacetylase 2 (387 aa).

The interval 73–382 is histone deacetylase; that stretch reads KVSIIYSSSY…IENLSRQGLI (310 aa). Catalysis depends on H201, which acts as the Proton donor/acceptor. D238, H240, and D318 together coordinate Zn(2+).

The protein belongs to the histone deacetylase family. HD type 3 subfamily. Zn(2+) is required as a cofactor.

The protein resides in the nucleus. It carries out the reaction N(6)-acetyl-L-lysyl-[histone] + H2O = L-lysyl-[histone] + acetate. Functionally, responsible for the deacetylation of lysine residues on the N-terminal part of the core histones (H2A, H2B, H3 and H4). Histone deacetylation gives a tag for epigenetic repression and plays an important role in transcriptional regulation, cell cycle progression and developmental events. Histone deacetylases act via the formation of large multiprotein complexes. The chain is Histone deacetylase 2 (HDA2) from Arabidopsis thaliana (Mouse-ear cress).